We begin with the raw amino-acid sequence, 144 residues long: uncharacterized protein (144 aa).

The next 4 membrane-spanning stretches (helical) occupy residues 27–47 (VVCALAELVGVLLIDIDIPDI), 49–69 (LLPIDILAIDDIVDANVLLAL), 83–103 (IVLLALDIASMLIDAILDATV), and 106–126 (ALDMASIFMLLPIFIPSILNV).

Its subcellular location is the membrane. This is an uncharacterized protein from Saccharomyces cerevisiae (strain ATCC 204508 / S288c) (Baker's yeast).